The primary structure comprises 274 residues: NH(3)-dependent NAD(+) synthetase (274 aa).

46 to 53 is a binding site for ATP; sequence GISGGQDS. Asp-52 is a Mg(2+) binding site. Arg-140 serves as a coordination point for deamido-NAD(+). Thr-160 lines the ATP pocket. Glu-165 lines the Mg(2+) pocket. The deamido-NAD(+) site is built by Lys-173 and Asp-180. ATP is bound by residues Lys-189 and Thr-211. Position 260 to 261 (260 to 261) interacts with deamido-NAD(+); sequence HK.

Belongs to the NAD synthetase family. As to quaternary structure, homodimer.

It carries out the reaction deamido-NAD(+) + NH4(+) + ATP = AMP + diphosphate + NAD(+) + H(+). It functions in the pathway cofactor biosynthesis; NAD(+) biosynthesis; NAD(+) from deamido-NAD(+) (ammonia route): step 1/1. Catalyzes the ATP-dependent amidation of deamido-NAD to form NAD. Uses ammonia as a nitrogen source. The chain is NH(3)-dependent NAD(+) synthetase from Lactococcus lactis subsp. cremoris (strain SK11).